Reading from the N-terminus, the 678-residue chain is UvrABC system protein C (678 aa).

One can recognise a GIY-YIG domain in the interval 16–95 (VEPGVYRFRD…IKEFDPRFNI (80 aa)). The 36-residue stretch at 208 to 243 (DRLIREMEQQMTAAAEDLDFERAARLRDNIGAMRRA) folds into the UVR domain. The span at 649–667 (EAPPEPGAEAPPDSGAAAA) shows a compositional bias: low complexity. The segment at 649 to 678 (EAPPEPGAEAPPDSGAAAAVMGNDQSRVPG) is disordered.

This sequence belongs to the UvrC family. As to quaternary structure, interacts with UvrB in an incision complex.

It localises to the cytoplasm. Functionally, the UvrABC repair system catalyzes the recognition and processing of DNA lesions. UvrC both incises the 5' and 3' sides of the lesion. The N-terminal half is responsible for the 3' incision and the C-terminal half is responsible for the 5' incision. This Mycolicibacterium gilvum (strain PYR-GCK) (Mycobacterium gilvum (strain PYR-GCK)) protein is UvrABC system protein C.